We begin with the raw amino-acid sequence, 132 residues long: Probable histone H2A.1 (132 aa).

A disordered region spans residues Met-1–Lys-22.

Belongs to the histone H2A family. In terms of assembly, the nucleosome is a histone octamer containing two molecules each of H2A, H2B, H3 and H4 assembled in one H3-H4 heterotetramer and two H2A-H2B heterodimers. The octamer wraps approximately 147 bp of DNA. Not ubiquitinated. In terms of tissue distribution, low level of expression; mainly in roots. Found in the root cap cells and in non dividing tissues of the plant, including the root elongation and maturation zones and the leaf veins.

Its subcellular location is the nucleus. It localises to the chromosome. Its function is as follows. Core component of nucleosome. Nucleosomes wrap and compact DNA into chromatin, limiting DNA accessibility to the cellular machineries which require DNA as a template. Histones thereby play a central role in transcription regulation, DNA repair, DNA replication and chromosomal stability. DNA accessibility is regulated via a complex set of post-translational modifications of histones, also called histone code, and nucleosome remodeling. The protein is Probable histone H2A.1 of Arabidopsis thaliana (Mouse-ear cress).